The following is a 141-amino-acid chain: Large ribosomal subunit protein uL11 (141 aa).

This sequence belongs to the universal ribosomal protein uL11 family. In terms of assembly, part of the ribosomal stalk of the 50S ribosomal subunit. Interacts with L10 and the large rRNA to form the base of the stalk. L10 forms an elongated spine to which L12 dimers bind in a sequential fashion forming a multimeric L10(L12)X complex. Post-translationally, one or more lysine residues are methylated.

Its function is as follows. Forms part of the ribosomal stalk which helps the ribosome interact with GTP-bound translation factors. This Clostridium perfringens (strain ATCC 13124 / DSM 756 / JCM 1290 / NCIMB 6125 / NCTC 8237 / Type A) protein is Large ribosomal subunit protein uL11.